The primary structure comprises 85 residues: MKKVLLLITAILAVAVGFPVSQDQEREKRSISDSDELASGFFVFPYPYPFRPLPPIPFPRFPWFRRNFPIPIPESAPTTPLPSEK.

The N-terminal stretch at 1–17 (MKKVLLLITAILAVAVG) is a signal peptide. The segment at 75-83 (SAPTTPLPS) is O-glycosylated at one site.

Post-translationally, O-glycosylated with core 1 or possibly core 8 glycans. As to expression, abundantly expressed in tonsil, lymph node, and trachea; strong expression in prostate; lower expression in thyroid, stomach, and colon.

It is found in the secreted. Can bind to the surface of B-lymphoma cells, but not T-lymphoma cells, consistent with a function as a secreted mediator acting upon B-cells. The polypeptide is Follicular dendritic cell secreted peptide (FDCSP) (Homo sapiens (Human)).